The primary structure comprises 374 residues: Growth/differentiation factor 8 (374 aa).

The signal sequence occupies residues 1-22; that stretch reads MHFTQVLISLSVLIACGPVGYG. Residues 23-265 constitute a propeptide that is removed on maturation; it reads DITAHQQPST…ISEGPKRIRR (243 aa). Residues asparagine 72 and asparagine 274 are each glycosylated (N-linked (GlcNAc...) asparagine). 4 disulfides stabilise this stretch: cysteine 271-cysteine 281, cysteine 280-cysteine 339, cysteine 308-cysteine 371, and cysteine 312-cysteine 373.

This sequence belongs to the TGF-beta family. In terms of assembly, homodimer; disulfide-linked. Predominantly expressed in muscle. At hatching, expression is strongest in the skin epithelium, and is also found in the retina and brain. From day 28, expressed in skeletal muscle. In the adult, highest expression is seen in the gastrointestinal tract, brain, muscle, heart and testis. Also expressed in the adult pharynx, kidney, spleen, liver, gill, eyes, skin, swim bladder and ovary.

It localises to the secreted. Functionally, acts specifically as a negative regulator of skeletal muscle growth. May down-regulate muscle-specific transcription factors such as myod and myog. The polypeptide is Growth/differentiation factor 8 (mstnb) (Danio rerio (Zebrafish)).